A 409-amino-acid chain; its full sequence is DNA primase small subunit (409 aa).

Residues E46, D111, and D113 contribute to the active site. The short motif at 123-133 (CCSGAQVCSKC) is the Zinc knuckle motif element.

Belongs to the eukaryotic-type primase small subunit family. In terms of assembly, DNA polymerase alpha:primase is a four subunit enzyme complex, which is assembled throughout the cell cycle, and consists of the two DNA polymerase subunits A POL1 and B POL12, and the DNA primase large PRI2 and small PRI1 subunits.

In terms of biological role, DNA primase is the polymerase that synthesizes small RNA primers for the Okazaki fragments made during discontinuous DNA replication. In a complex with DNA polymerase alpha (DNA polymerase alpha:primase) constitutes a replicative polymerase. Both primase components participate in formation of the active center, but the ATP-binding site is exclusively located on p48. The chain is DNA primase small subunit (PRI1) from Saccharomyces cerevisiae (strain ATCC 204508 / S288c) (Baker's yeast).